Here is a 376-residue protein sequence, read N- to C-terminus: MTVLVVNSGSSSLKYAVVRPASGEFLADGIIEEIGSGAVPDHDAALRAAFDELAAAGLHLEDLDLKAVGHRMVHGGKTFYKPSVVDDELIAKARELSPLAPLHNPPAIKGIEVARKLLPDLPHIAVFDTAFFHDLPAPASTYAIDRELAETWHIKRYGFHGTSHEYVSQQAAIFLDRPLESLNQIVLHLGNGASASAVAGGKAVDTSMGLTPMEGLVMGTRSGDIDPGVIMYLWRTAGMSVDDIESMLNRRSGVLGLGGASDFRKLRELIESGDEHAKLAYDVYIHRLRKYIGAYMAVLGRTDVISFTAGVGENVPPVRRDALAGLGGLGIEIDDALNSAKSDEPRLISTPDSRVTVLVVPTNEELAIARACVGVV.

Asn-7 contacts Mg(2+). Lys-14 is a binding site for ATP. Arg-71 provides a ligand contact to substrate. The active-site Proton donor/acceptor is Asp-128. Residues 188 to 192 (HLGNG), 262 to 264 (DFR), and 310 to 314 (GVGEN) contribute to the ATP site. Glu-364 contributes to the Mg(2+) binding site.

Belongs to the acetokinase family. Homodimer. Mg(2+) serves as cofactor. The cofactor is Mn(2+).

It localises to the cytoplasm. The enzyme catalyses acetate + ATP = acetyl phosphate + ADP. It functions in the pathway metabolic intermediate biosynthesis; acetyl-CoA biosynthesis; acetyl-CoA from acetate: step 1/2. In terms of biological role, catalyzes the formation of acetyl phosphate from acetate and ATP. Can also catalyze the reverse reaction. In Mycolicibacterium smegmatis (strain ATCC 700084 / mc(2)155) (Mycobacterium smegmatis), this protein is Acetate kinase.